The primary structure comprises 882 residues: Alanine--tRNA ligase (882 aa).

Zn(2+) contacts are provided by histidine 568, histidine 572, cysteine 670, and histidine 674.

This sequence belongs to the class-II aminoacyl-tRNA synthetase family. The cofactor is Zn(2+).

The protein localises to the cytoplasm. It catalyses the reaction tRNA(Ala) + L-alanine + ATP = L-alanyl-tRNA(Ala) + AMP + diphosphate. In terms of biological role, catalyzes the attachment of alanine to tRNA(Ala) in a two-step reaction: alanine is first activated by ATP to form Ala-AMP and then transferred to the acceptor end of tRNA(Ala). Also edits incorrectly charged Ser-tRNA(Ala) and Gly-tRNA(Ala) via its editing domain. The polypeptide is Alanine--tRNA ligase (Lactobacillus gasseri (strain ATCC 33323 / DSM 20243 / BCRC 14619 / CIP 102991 / JCM 1131 / KCTC 3163 / NCIMB 11718 / NCTC 13722 / AM63)).